The primary structure comprises 441 residues: RNA-binding protein BRN1 (441 aa).

RRM domains lie at V18 to G99 and H106 to T186. The segment covering Q258–D273 has biased composition (polar residues). Residues Q258–R282 are disordered. One can recognise an RRM 3 domain in the interval A349–D427.

As to expression, highly expressed in stems and cauline leaves, and at lower levels in siliques, flowers, roots and rosette leaves.

It is found in the cytoplasm. Functionally, RNA-binding protein involved in the regulation of flowering time. Acts as a repressor of the activity of SOC1, a transcriptional activator of flowering time. Binds to the 3'-UTR of SOC1 mRNA in the cytoplasm and participates in SOC1 mRNA decay, mediated by the distal region of the SOC1 3'-UTR. Acts as a positive regulator of salicylic acid (SA)-mediated immunity. May act on SA signaling-related genes at a post-transcriptional level. The protein is RNA-binding protein BRN1 of Arabidopsis thaliana (Mouse-ear cress).